The chain runs to 77 residues: Protein RALF-like 17 (77 aa).

Residues 1 to 29 (MAASREFIICCFLTLLLCNFFMRVESGAA) form the signal peptide. An intrachain disulfide couples cysteine 37 to cysteine 51.

The protein belongs to the plant rapid alkalinization factor (RALF) family.

Its subcellular location is the secreted. Cell signaling peptide that may regulate plant stress, growth, and development. Mediates a rapid alkalinization of extracellular space by mediating a transient increase in the cytoplasmic Ca(2+) concentration leading to a calcium-dependent signaling events through a cell surface receptor and a concomitant activation of some intracellular mitogen-activated protein kinases. The sequence is that of Protein RALF-like 17 (RALFL17) from Arabidopsis thaliana (Mouse-ear cress).